A 358-amino-acid chain; its full sequence is Programmed cell death protein 2-like (358 aa).

A2 carries the post-translational modification N-acetylalanine. S20 carries the post-translational modification Phosphoserine. T22 is subject to Phosphothreonine.

In terms of tissue distribution, higher expression in lung, colon, mammary gland, cervix, stomach and small intestine.

Functionally, over-expression suppresses AP1, CREB, NFAT, and NF-kB transcriptional activation, and delays cell cycle progression at S phase. The chain is Programmed cell death protein 2-like (PDCD2L) from Homo sapiens (Human).